We begin with the raw amino-acid sequence, 318 residues long: Ribosomal RNA small subunit methyltransferase H (318 aa).

Residues 34 to 36 (GGY), aspartate 52, phenylalanine 79, aspartate 100, and glutamine 107 contribute to the S-adenosyl-L-methionine site. Positions 286 to 318 (GPAPDEARANPRARSAKLRAAARTAAPAWETVS) are disordered. The span at 303 to 318 (LRAAARTAAPAWETVS) shows a compositional bias: low complexity.

This sequence belongs to the methyltransferase superfamily. RsmH family.

The protein resides in the cytoplasm. The enzyme catalyses cytidine(1402) in 16S rRNA + S-adenosyl-L-methionine = N(4)-methylcytidine(1402) in 16S rRNA + S-adenosyl-L-homocysteine + H(+). In terms of biological role, specifically methylates the N4 position of cytidine in position 1402 (C1402) of 16S rRNA. This is Ribosomal RNA small subunit methyltransferase H from Paramagnetospirillum magneticum (strain ATCC 700264 / AMB-1) (Magnetospirillum magneticum).